The chain runs to 245 residues: 1-(5-phosphoribosyl)-5-[(5-phosphoribosylamino)methylideneamino] imidazole-4-carboxamide isomerase (245 aa).

Aspartate 13 functions as the Proton acceptor in the catalytic mechanism. Aspartate 132 (proton donor) is an active-site residue.

This sequence belongs to the HisA/HisF family.

The protein localises to the cytoplasm. The catalysed reaction is 1-(5-phospho-beta-D-ribosyl)-5-[(5-phospho-beta-D-ribosylamino)methylideneamino]imidazole-4-carboxamide = 5-[(5-phospho-1-deoxy-D-ribulos-1-ylimino)methylamino]-1-(5-phospho-beta-D-ribosyl)imidazole-4-carboxamide. It functions in the pathway amino-acid biosynthesis; L-histidine biosynthesis; L-histidine from 5-phospho-alpha-D-ribose 1-diphosphate: step 4/9. This Frankia alni (strain DSM 45986 / CECT 9034 / ACN14a) protein is 1-(5-phosphoribosyl)-5-[(5-phosphoribosylamino)methylideneamino] imidazole-4-carboxamide isomerase.